Reading from the N-terminus, the 399-residue chain is Succinate--CoA ligase [ADP-forming] subunit beta (399 aa).

Positions 9 to 254 constitute an ATP-grasp domain; that stretch reads KQVLAKYGVP…EDEEDPMELE (246 aa). Residues Lys46, 53–55, Glu109, Cys112, and Glu117 contribute to the ATP site; that span reads GRG. Residues Asn209 and Asp223 each contribute to the Mg(2+) site. Substrate is bound by residues Asn274 and 331 to 333; that span reads GIM.

This sequence belongs to the succinate/malate CoA ligase beta subunit family. As to quaternary structure, heterotetramer of two alpha and two beta subunits. Mg(2+) is required as a cofactor.

It carries out the reaction succinate + ATP + CoA = succinyl-CoA + ADP + phosphate. The enzyme catalyses GTP + succinate + CoA = succinyl-CoA + GDP + phosphate. It participates in carbohydrate metabolism; tricarboxylic acid cycle; succinate from succinyl-CoA (ligase route): step 1/1. Functionally, succinyl-CoA synthetase functions in the citric acid cycle (TCA), coupling the hydrolysis of succinyl-CoA to the synthesis of either ATP or GTP and thus represents the only step of substrate-level phosphorylation in the TCA. The beta subunit provides nucleotide specificity of the enzyme and binds the substrate succinate, while the binding sites for coenzyme A and phosphate are found in the alpha subunit. This is Succinate--CoA ligase [ADP-forming] subunit beta from Rhodospirillum rubrum (strain ATCC 11170 / ATH 1.1.1 / DSM 467 / LMG 4362 / NCIMB 8255 / S1).